We begin with the raw amino-acid sequence, 509 residues long: Diacylglycerol kinase 5 (509 aa).

The 152-residue stretch at 36 to 187 folds into the DAGKc domain; the sequence is TPASPVLVFI…IDNWHILMRM (152 aa). A compositionally biased stretch (basic and acidic residues) spans 439–452; it reads RSVFDPSTPRHQDG. Positions 439–509 are disordered; it reads RSVFDPSTPR…SNVHGWSHVL (71 aa). Residues 453-467 are compositionally biased toward acidic residues; the sequence is AEDYDDNEDDSVAEG. A compositionally biased stretch (basic and acidic residues) spans 468–489; the sequence is EEFRKFGAADTFKIPDEGEHSN. The segment covering 490 to 500 has biased composition (basic residues); that stretch reads KKGRASRRRNS.

This sequence belongs to the eukaryotic diacylglycerol kinase family. As to quaternary structure, monomer.

It catalyses the reaction a 1,2-diacyl-sn-glycerol + ATP = a 1,2-diacyl-sn-glycero-3-phosphate + ADP + H(+). Functionally, phosphorylates the second messenger diacylglycerol (DAG) to generate phosphatidic acid (PA), another important signaling molecule. PA is required for plant development and responses to abiotic stress and pathogen attack. May be involved in the accumulation of PA during cold stress. This chain is Diacylglycerol kinase 5 (DGK5), found in Arabidopsis thaliana (Mouse-ear cress).